The chain runs to 431 residues: Glutamyl-tRNA reductase (431 aa).

Substrate-binding positions include 49–52, serine 109, 114–116, and glutamine 120; these read TCNR and EGQ. Cysteine 50 serves as the catalytic Nucleophile. An NADP(+)-binding site is contributed by 189–194; that stretch reads GAGKMS.

Belongs to the glutamyl-tRNA reductase family. As to quaternary structure, homodimer.

The enzyme catalyses (S)-4-amino-5-oxopentanoate + tRNA(Glu) + NADP(+) = L-glutamyl-tRNA(Glu) + NADPH + H(+). It functions in the pathway porphyrin-containing compound metabolism; protoporphyrin-IX biosynthesis; 5-aminolevulinate from L-glutamyl-tRNA(Glu): step 1/2. The protein operates within porphyrin-containing compound metabolism; chlorophyll biosynthesis. Its function is as follows. Catalyzes the NADPH-dependent reduction of glutamyl-tRNA(Glu) to glutamate 1-semialdehyde (GSA). This is Glutamyl-tRNA reductase from Trichodesmium erythraeum (strain IMS101).